Here is a 132-residue protein sequence, read N- to C-terminus: Small ribosomal subunit protein uS8 (132 aa).

The protein belongs to the universal ribosomal protein uS8 family. Part of the 30S ribosomal subunit. Contacts proteins S5 and S12.

Its function is as follows. One of the primary rRNA binding proteins, it binds directly to 16S rRNA central domain where it helps coordinate assembly of the platform of the 30S subunit. The polypeptide is Small ribosomal subunit protein uS8 (Bacillus pumilus (strain SAFR-032)).